The chain runs to 321 residues: Lipoyl synthase (321 aa).

7 residues coordinate [4Fe-4S] cluster: cysteine 68, cysteine 73, cysteine 79, cysteine 94, cysteine 98, cysteine 101, and serine 308. A Radical SAM core domain is found at 80–297; the sequence is FNHGTATFMI…KEEAMAMGFT (218 aa).

Belongs to the radical SAM superfamily. Lipoyl synthase family. It depends on [4Fe-4S] cluster as a cofactor.

It is found in the cytoplasm. The enzyme catalyses [[Fe-S] cluster scaffold protein carrying a second [4Fe-4S](2+) cluster] + N(6)-octanoyl-L-lysyl-[protein] + 2 oxidized [2Fe-2S]-[ferredoxin] + 2 S-adenosyl-L-methionine + 4 H(+) = [[Fe-S] cluster scaffold protein] + N(6)-[(R)-dihydrolipoyl]-L-lysyl-[protein] + 4 Fe(3+) + 2 hydrogen sulfide + 2 5'-deoxyadenosine + 2 L-methionine + 2 reduced [2Fe-2S]-[ferredoxin]. It functions in the pathway protein modification; protein lipoylation via endogenous pathway; protein N(6)-(lipoyl)lysine from octanoyl-[acyl-carrier-protein]: step 2/2. Its function is as follows. Catalyzes the radical-mediated insertion of two sulfur atoms into the C-6 and C-8 positions of the octanoyl moiety bound to the lipoyl domains of lipoate-dependent enzymes, thereby converting the octanoylated domains into lipoylated derivatives. The chain is Lipoyl synthase from Serratia proteamaculans (strain 568).